We begin with the raw amino-acid sequence, 1091 residues long: Protein CTR9 homolog (1091 aa).

Alanine 2 is modified (N-acetylalanine). TPR repeat units follow at residues 90–127 (GAYYSYLGKTETKNREKEEQFISATRYYNKASRIDMHE), 128–161 (PSTWVGKGQLLLAKGEIDNALQAFKIVLDTAPDN), 163–195 (PALLGQASVEFNRGRFSESLQLYKRALQVFPGC), 197–230 (AAVRLGIGLCRYKLGQLDKARQAFDRVLQLDPDN), 232–267 (EALVALGIMDLQANDSIGMRKGMDRMQQAFEIYPYC), 305–338 (SHSFYNLARSYHSKGDFEKAGMYYMAAIKETNNN), 343–376 (VFPYFGLGQVQLKLGELKGSVFNFEKVLEVYPDN), 377–410 (CETLKALGHLYTQLGQNEKALEYMRKATKLDPRD), 412–443 (QAFVGLGELLISSDTGAALDAFKMARTLMKKG), 449–482 (IEVLNDIGALHFEREEFESALENFKEALGDGIWI), 558–591 (IDAYLRLAASAKAQNNLPLAIELVNEALKVDDKN), 593–625 (NALSLLGELELKNDDWVKAKETFRAANDATDGK), 640–673 (AAMRNEKRNPKLEATHLEKAKELYTKVLTQHNSN), 674–707 (MYAANGSGIVLAEKGQFDIAKDVFTQVQEAASGS), 713–746 (PDVWVNLAHVYFAQGNFALTVKMYQNCLRKFFYN), and 749–782 (SQILLYLARTHYEAEQWQECKKTLLRAIHLTPSN). The disordered stretch occupies residues 919–1091 (FQRIKEQWKS…EEEEEEEEAN (173 aa)). Basic residues predominate over residues 951–965 (ERRRKKGGKRRKKDK). Acidic residues-rich tracts occupy residues 974 to 993 (DDEEEAATMDDHNEVEDEDA), 1003 to 1016 (MTTQEAEEPVDDDA), 1026 to 1035 (EDPDVDDDEV), and 1080 to 1091 (NMEEEEEEEEAN).

As to quaternary structure, component of the nuclear PAF1 complex (PAF1C), which consists of VIP2/ELF7/PAF1, VIP3/SKI8/WDR61, VIP4/LEO1, VIP5/RTF1, VIP6/ELF8/CTR9 and CDC73. Interacts with VIP3 and VIP4. Expressed in roots, leaves and shoot apex.

The protein resides in the nucleus. Its function is as follows. Component of the PAF1 complex (PAF1C) which is involved in histone modifications such as methylation on histone H3 'Lys-4' (H3K4me3). Involved in regulation of flowering time. Required for the expression of the MADS box genes and flowering repressors FLC, AGL27/FLM and AGL31/MAF2. Required for histone H3 trimethylation on 'Lys-4' H3K4me3 at the FLC and AGL27/FLM loci. Involved in the control of seed dormancy and germination. This Arabidopsis thaliana (Mouse-ear cress) protein is Protein CTR9 homolog.